Consider the following 209-residue polypeptide: Octanoyltransferase (209 aa).

In terms of domain architecture, BPL/LPL catalytic spans 30–209 (DNEPEIVYLV…IQTEFNKIFK (180 aa)). Residues 69–76 (RGGKFTFH), 143–145 (AIG), and 156–158 (GIA) contribute to the substrate site. The active-site Acyl-thioester intermediate is C174.

It belongs to the LipB family.

The protein localises to the cytoplasm. It carries out the reaction octanoyl-[ACP] + L-lysyl-[protein] = N(6)-octanoyl-L-lysyl-[protein] + holo-[ACP] + H(+). Its pathway is protein modification; protein lipoylation via endogenous pathway; protein N(6)-(lipoyl)lysine from octanoyl-[acyl-carrier-protein]: step 1/2. In terms of biological role, catalyzes the transfer of endogenously produced octanoic acid from octanoyl-acyl-carrier-protein onto the lipoyl domains of lipoate-dependent enzymes. Lipoyl-ACP can also act as a substrate although octanoyl-ACP is likely to be the physiological substrate. In Rickettsia prowazekii (strain Madrid E), this protein is Octanoyltransferase.